Consider the following 398-residue polypeptide: 1-deoxy-D-xylulose 5-phosphate reductoisomerase (398 aa).

NADPH is bound by residues threonine 28, glycine 29, serine 30, isoleucine 31, glycine 54, asparagine 57, and asparagine 135. Lysine 136 lines the 1-deoxy-D-xylulose 5-phosphate pocket. Glutamate 137 provides a ligand contact to NADPH. Aspartate 159 contributes to the Mn(2+) binding site. Residues serine 160, glutamate 161, serine 185, and histidine 208 each contribute to the 1-deoxy-D-xylulose 5-phosphate site. Glutamate 161 contacts Mn(2+). Residue glycine 214 coordinates NADPH. Residues serine 221, asparagine 226, lysine 227, and glutamate 230 each contribute to the 1-deoxy-D-xylulose 5-phosphate site. Glutamate 230 is a Mn(2+) binding site.

It belongs to the DXR family. It depends on Mg(2+) as a cofactor. Requires Mn(2+) as cofactor.

It catalyses the reaction 2-C-methyl-D-erythritol 4-phosphate + NADP(+) = 1-deoxy-D-xylulose 5-phosphate + NADPH + H(+). Its pathway is isoprenoid biosynthesis; isopentenyl diphosphate biosynthesis via DXP pathway; isopentenyl diphosphate from 1-deoxy-D-xylulose 5-phosphate: step 1/6. Catalyzes the NADPH-dependent rearrangement and reduction of 1-deoxy-D-xylulose-5-phosphate (DXP) to 2-C-methyl-D-erythritol 4-phosphate (MEP). The protein is 1-deoxy-D-xylulose 5-phosphate reductoisomerase of Rhodococcus jostii (strain RHA1).